The primary structure comprises 301 residues: 4-hydroxy-tetrahydrodipicolinate synthase (301 aa).

Thr-50 lines the pyruvate pocket. Residue Tyr-138 is the Proton donor/acceptor of the active site. Lys-167 serves as the catalytic Schiff-base intermediate with substrate. Ile-209 is a pyruvate binding site.

The protein belongs to the DapA family. Homotetramer; dimer of dimers.

The protein resides in the cytoplasm. It catalyses the reaction L-aspartate 4-semialdehyde + pyruvate = (2S,4S)-4-hydroxy-2,3,4,5-tetrahydrodipicolinate + H2O + H(+). The protein operates within amino-acid biosynthesis; L-lysine biosynthesis via DAP pathway; (S)-tetrahydrodipicolinate from L-aspartate: step 3/4. Catalyzes the condensation of (S)-aspartate-beta-semialdehyde [(S)-ASA] and pyruvate to 4-hydroxy-tetrahydrodipicolinate (HTPA). This Sorangium cellulosum (strain So ce56) (Polyangium cellulosum (strain So ce56)) protein is 4-hydroxy-tetrahydrodipicolinate synthase.